The sequence spans 509 residues: Phosphoglycerate kinase, glycosomal (509 aa).

The (2R)-3-phosphoglycerate site is built by V32, D33, F34, N35, R48, S70, H71, G73, R74, R224, H260, and R261. Residue G306 participates in ADP binding. Residue G306 participates in CDP binding. K308 is a (2R)-3-phosphoglycerate binding site. K308 lines the AMP pocket. Residue D311 coordinates CDP. D311 provides a ligand contact to Mg(2+). Positions 312 and 330 each coordinate ADP. Residue K312 participates in AMP binding. ATP is bound at residue K312. Position 330 (G330) interacts with CDP. AMP-binding residues include A331 and A403. Positions 331 and 403 each coordinate ATP. ADP-binding residues include A403 and N427. CDP contacts are provided by G428 and F433. Residues F433, E434, D466, and S467 each contribute to the ADP site. Residue E434 participates in AMP binding. ATP is bound by residues E434, D466, and S467. D466 provides a ligand contact to Mg(2+).

The protein belongs to the phosphoglycerate kinase family. Monomer. It depends on Mg(2+) as a cofactor.

It is found in the glycosome. The enzyme catalyses (2R)-3-phosphoglycerate + ATP = (2R)-3-phospho-glyceroyl phosphate + ADP. It functions in the pathway carbohydrate degradation; glycolysis; pyruvate from D-glyceraldehyde 3-phosphate: step 2/5. The chain is Phosphoglycerate kinase, glycosomal (56PGK) from Trypanosoma congolense.